The primary structure comprises 400 residues: 8-amino-7-oxononanoate synthase (400 aa).

Arg21 is a binding site for substrate. A pyridoxal 5'-phosphate-binding site is contributed by Gly112–Tyr113. Residue His137 participates in substrate binding. Pyridoxal 5'-phosphate is bound by residues Ser183, His211, and Thr239. Lys242 bears the N6-(pyridoxal phosphate)lysine mark. Thr358 serves as a coordination point for substrate.

It belongs to the class-II pyridoxal-phosphate-dependent aminotransferase family. BioF subfamily. Homodimer. It depends on pyridoxal 5'-phosphate as a cofactor.

The enzyme catalyses 6-carboxyhexanoyl-[ACP] + L-alanine + H(+) = (8S)-8-amino-7-oxononanoate + holo-[ACP] + CO2. The protein operates within cofactor biosynthesis; biotin biosynthesis. Functionally, catalyzes the decarboxylative condensation of pimeloyl-[acyl-carrier protein] and L-alanine to produce 8-amino-7-oxononanoate (AON), [acyl-carrier protein], and carbon dioxide. This Burkholderia lata (strain ATCC 17760 / DSM 23089 / LMG 22485 / NCIMB 9086 / R18194 / 383) protein is 8-amino-7-oxononanoate synthase.